Here is a 124-residue protein sequence, read N- to C-terminus: UPF0482 protein YPK_1977 (124 aa).

The signal sequence occupies residues Met1 to Ala32. Residues Gly47–Asn69 form a disordered region.

It belongs to the UPF0482 family.

The protein is UPF0482 protein YPK_1977 of Yersinia pseudotuberculosis serotype O:3 (strain YPIII).